The following is a 346-amino-acid chain: Acrosin (346 aa).

A signal peptide spans 1 to 19 (MALLLPLAVLLAACRPGHG). 6 cysteine pairs are disulfide-bonded: C24–C146, C27–C154, C70–C86, C168–C240, C203–C219, and C230–C260. A Peptidase S1 domain is found at 41-284 (VVGGTEALHG…FYNWILLQVR (244 aa)). The active-site Charge relay system is the H85. N128 carries N-linked (GlcNAc...) asparagine glycosylation. The active-site Charge relay system is D134. N-linked (GlcNAc...) asparagine glycosylation is present at N204. Residue S234 is the Charge relay system of the active site. Residues 266-346 (PGIYTSTQHF…LLQSLWGSKA (81 aa)) constitute a propeptide that is removed on maturation.

It belongs to the peptidase S1 family. In terms of assembly, heavy chain (catalytic) and a light chain linked by two disulfide bonds. In terms of processing, glycosylated.

It carries out the reaction Preferential cleavage: Arg-|-Xaa, Lys-|-Xaa.. Inhibited by aprotinin, ovomucoid, soybean trypsin inhibitor, benzamidine, p-aminobenzamidine, and zinc ions. Activity also inhibited by a Kazal-type proteinase inhibitor. Its function is as follows. Serine protease of trypsin-like cleavage specificity. Synthesized in a zymogen form, proacrosin and stored in the acrosome. In Meleagris gallopavo (Wild turkey), this protein is Acrosin.